A 265-amino-acid chain; its full sequence is tRNA pseudouridine synthase A (265 aa).

Aspartate 52 acts as the Nucleophile in catalysis. Position 112 (tyrosine 112) interacts with substrate.

This sequence belongs to the tRNA pseudouridine synthase TruA family. Homodimer.

It catalyses the reaction uridine(38/39/40) in tRNA = pseudouridine(38/39/40) in tRNA. Its function is as follows. Formation of pseudouridine at positions 38, 39 and 40 in the anticodon stem and loop of transfer RNAs. The protein is tRNA pseudouridine synthase A of Akkermansia muciniphila (strain ATCC BAA-835 / DSM 22959 / JCM 33894 / BCRC 81048 / CCUG 64013 / CIP 107961 / Muc).